The sequence spans 366 residues: tRNA(Met) cytidine acetate ligase (366 aa).

ATP-binding positions include 7–20, Gly-96, Asn-152, and Arg-175; that span reads IAEFNPFHNGHKYL.

Belongs to the TmcAL family.

It localises to the cytoplasm. The enzyme catalyses cytidine(34) in elongator tRNA(Met) + acetate + ATP = N(4)-acetylcytidine(34) in elongator tRNA(Met) + AMP + diphosphate. Catalyzes the formation of N(4)-acetylcytidine (ac(4)C) at the wobble position of elongator tRNA(Met), using acetate and ATP as substrates. First activates an acetate ion to form acetyladenylate (Ac-AMP) and then transfers the acetyl group to tRNA to form ac(4)C34. The protein is tRNA(Met) cytidine acetate ligase of Streptococcus mutans serotype c (strain ATCC 700610 / UA159).